The chain runs to 639 residues: 1-deoxy-D-xylulose-5-phosphate synthase (639 aa).

Thiamine diphosphate is bound by residues His-79 and 120 to 122 (AHS). Residue Asp-151 coordinates Mg(2+). Thiamine diphosphate contacts are provided by residues 152-153 (GA), Asn-180, Tyr-289, and Glu-371. Asn-180 contacts Mg(2+).

It belongs to the transketolase family. DXPS subfamily. In terms of assembly, homodimer. It depends on Mg(2+) as a cofactor. Requires thiamine diphosphate as cofactor.

It catalyses the reaction D-glyceraldehyde 3-phosphate + pyruvate + H(+) = 1-deoxy-D-xylulose 5-phosphate + CO2. The protein operates within metabolic intermediate biosynthesis; 1-deoxy-D-xylulose 5-phosphate biosynthesis; 1-deoxy-D-xylulose 5-phosphate from D-glyceraldehyde 3-phosphate and pyruvate: step 1/1. Functionally, catalyzes the acyloin condensation reaction between C atoms 2 and 3 of pyruvate and glyceraldehyde 3-phosphate to yield 1-deoxy-D-xylulose-5-phosphate (DXP). This Rhizorhabdus wittichii (strain DSM 6014 / CCUG 31198 / JCM 15750 / NBRC 105917 / EY 4224 / RW1) (Sphingomonas wittichii) protein is 1-deoxy-D-xylulose-5-phosphate synthase.